The following is a 119-amino-acid chain: Protein MRP-126 (119 aa).

EF-hand domains lie at 23 to 58 and 59 to 94; these read DVFH…LKHV and KNQV…VTVA. Ca(2+) is bound by residues Thr37, Glu42, Asp72, Asn74, Asp76, Gln78, and Glu83.

It belongs to the S-100 family. As to expression, expressed in v-myb-transformed myelomonocytic cells.

In Gallus gallus (Chicken), this protein is Protein MRP-126.